The primary structure comprises 366 residues: Histidinol-phosphate aminotransferase (366 aa).

An N6-(pyridoxal phosphate)lysine modification is found at K228.

The protein belongs to the class-II pyridoxal-phosphate-dependent aminotransferase family. Histidinol-phosphate aminotransferase subfamily. In terms of assembly, homodimer. Pyridoxal 5'-phosphate is required as a cofactor.

The enzyme catalyses L-histidinol phosphate + 2-oxoglutarate = 3-(imidazol-4-yl)-2-oxopropyl phosphate + L-glutamate. It functions in the pathway amino-acid biosynthesis; L-histidine biosynthesis; L-histidine from 5-phospho-alpha-D-ribose 1-diphosphate: step 7/9. This chain is Histidinol-phosphate aminotransferase, found in Stutzerimonas stutzeri (Pseudomonas stutzeri).